The sequence spans 460 residues: Bifunctional protein GlmU (460 aa).

Positions methionine 1 to arginine 235 are pyrophosphorylase. UDP-N-acetyl-alpha-D-glucosamine-binding positions include leucine 9–glycine 12, lysine 23, glutamine 76, and glycine 81–threonine 82. Aspartate 109 provides a ligand contact to Mg(2+). The UDP-N-acetyl-alpha-D-glucosamine site is built by glycine 146, glutamate 161, asparagine 176, and asparagine 233. Asparagine 233 is a Mg(2+) binding site. Residues valine 236–aspartate 256 are linker. The segment at glycine 257–arginine 460 is N-acetyltransferase. Residues arginine 338 and lysine 356 each contribute to the UDP-N-acetyl-alpha-D-glucosamine site. Histidine 368 functions as the Proton acceptor in the catalytic mechanism. UDP-N-acetyl-alpha-D-glucosamine-binding residues include tyrosine 371 and asparagine 382. Residues asparagine 391–tyrosine 392 and alanine 428 each bind acetyl-CoA.

In the N-terminal section; belongs to the N-acetylglucosamine-1-phosphate uridyltransferase family. The protein in the C-terminal section; belongs to the transferase hexapeptide repeat family. As to quaternary structure, homotrimer. Mg(2+) serves as cofactor.

It localises to the cytoplasm. The enzyme catalyses alpha-D-glucosamine 1-phosphate + acetyl-CoA = N-acetyl-alpha-D-glucosamine 1-phosphate + CoA + H(+). The catalysed reaction is N-acetyl-alpha-D-glucosamine 1-phosphate + UTP + H(+) = UDP-N-acetyl-alpha-D-glucosamine + diphosphate. The protein operates within nucleotide-sugar biosynthesis; UDP-N-acetyl-alpha-D-glucosamine biosynthesis; N-acetyl-alpha-D-glucosamine 1-phosphate from alpha-D-glucosamine 6-phosphate (route II): step 2/2. Its pathway is nucleotide-sugar biosynthesis; UDP-N-acetyl-alpha-D-glucosamine biosynthesis; UDP-N-acetyl-alpha-D-glucosamine from N-acetyl-alpha-D-glucosamine 1-phosphate: step 1/1. It functions in the pathway bacterial outer membrane biogenesis; LPS lipid A biosynthesis. Functionally, catalyzes the last two sequential reactions in the de novo biosynthetic pathway for UDP-N-acetylglucosamine (UDP-GlcNAc). The C-terminal domain catalyzes the transfer of acetyl group from acetyl coenzyme A to glucosamine-1-phosphate (GlcN-1-P) to produce N-acetylglucosamine-1-phosphate (GlcNAc-1-P), which is converted into UDP-GlcNAc by the transfer of uridine 5-monophosphate (from uridine 5-triphosphate), a reaction catalyzed by the N-terminal domain. This is Bifunctional protein GlmU from Bifidobacterium longum (strain DJO10A).